The chain runs to 546 residues: (-)-5-epieremophilene synthase STPS3 (546 aa).

Residues D299, D303, D442, T446, and E450 each contribute to the Mg(2+) site. A DDXXD motif motif is present at residues 299–303 (DDTYD).

This sequence belongs to the terpene synthase family. Tpsa subfamily. In terms of assembly, monomer. Mg(2+) serves as cofactor. In terms of tissue distribution, highly expressed in flowers and at lower levels in leaves.

The enzyme catalyses (2E,6E)-farnesyl diphosphate = (-)-5-epi-eremophilene + diphosphate. It functions in the pathway secondary metabolite biosynthesis; terpenoid biosynthesis. Its function is as follows. Sesquiterpene synthase that catalyzes the conversion of farnesyl diphosphate to (-)-5-epi-eremophilene. The chain is (-)-5-epieremophilene synthase STPS3 from Salvia miltiorrhiza (Chinese sage).